The following is a 352-amino-acid chain: C-C chemokine receptor type 5 (352 aa).

At 1–30 (MDYQVSSPTYDIDYYTSEPCQKINVKQIAA) the chain is on the extracellular side. Y3 is modified (sulfotyrosine). O-linked (GalNAc...) serine glycosylation is found at S6 and S7. 3 positions are modified to sulfotyrosine: Y10, Y14, and Y15. Intrachain disulfides connect C20–C269 and C101–C178. A helical transmembrane segment spans residues 31–58 (RLLPPLYSLVFIFGFVGNILVVLILINC). Residues 59–68 (KRLKSMTDIY) lie on the Cytoplasmic side of the membrane. Residues 69 to 89 (LLNLAISDLLFLLTVPFWAHY) form a helical membrane-spanning segment. The Extracellular segment spans residues 90 to 102 (AAAQWDFGNTMCQ). The helical transmembrane segment at 103–124 (LLTGLYFIGFFSGIFFIILLTI) threads the bilayer. Residues 125 to 141 (DRYLAIVHAVFALKART) are Cytoplasmic-facing. A helical transmembrane segment spans residues 142–166 (VTFGVVTSVITWVVAVFASLPGIIF). Topologically, residues 167-198 (TRSQREGLHYTCSSHFPYSQYQFWKNFQTLKI) are extracellular. Residues 199–218 (VILGLVLPLLVMVICYSGIL) form a helical membrane-spanning segment. The Cytoplasmic portion of the chain corresponds to 219–235 (KTLLRCRNEKKRHRAVR). Residues 236–260 (LIFTIMIVYFLFWAPYNIVLLLNTF) form a helical membrane-spanning segment. Residues 261–277 (QEFFGLNNCSSSNRLDQ) are Extracellular-facing. A helical transmembrane segment spans residues 278-301 (AMQVTETLGMTHCCINPIIYAFVG). The Cytoplasmic segment spans residues 302–352 (EKFRNYLLVFFQKHIAKRFCKCCSIFQQEAPERASSVYTRSTGEQEISVGL). Residues C321, C323, and C324 are each lipidated (S-palmitoyl cysteine). 4 positions are modified to phosphoserine; by BARK1: S336, S337, S342, and S349.

This sequence belongs to the G-protein coupled receptor 1 family. As to quaternary structure, interacts with PRAF2. Efficient ligand binding to CCL3/MIP-1alpha and CCL4/MIP-1beta requires sulfation, O-glycosylation and sialic acid modifications. Glycosylation on Ser-6 is required for efficient binding of CCL4. Interacts with GRK2. Interacts with ARRB1 and ARRB2. Interacts with CNIH4. Interacts with S100A4; this interaction stimulates T-lymphocyte chemotaxis. In terms of processing, sulfated on at least 2 of the N-terminal tyrosines. Sulfation is required for efficient binding of the chemokines, CCL3 and CCL4. Post-translationally, palmitoylation in the C-terminal is important for cell surface expression. Phosphorylation on serine residues in the C-terminal is stimulated by binding CC chemokines especially by APO-RANTES. In terms of processing, O-glycosylated, but not N-glycosylated. Ser-6 appears to be the major site even if Ser-7 may be also O-glycosylated. Also sialylated glycans present which contribute to chemokine binding. Thr-16 and Ser-17 may also be glycosylated and, if so, with small moieties such as a T-antigen.

The protein resides in the cell membrane. Its function is as follows. Receptor for a number of inflammatory CC-chemokines including CCL3/MIP-1-alpha, CCL4/MIP-1-beta and RANTES and subsequently transduces a signal by increasing the intracellular calcium ion level. May play a role in the control of granulocytic lineage proliferation or differentiation. Participates in T-lymphocyte migration to the infection site by acting as a chemotactic receptor. This chain is C-C chemokine receptor type 5 (CCR5), found in Papio anubis (Olive baboon).